We begin with the raw amino-acid sequence, 186 residues long: Mitoferrin-2B (186 aa).

The Solcar repeat unit spans residues S75–T163. The next 3 helical transmembrane spans lie at V77–Y96, R137–Y157, and G172–P185.

This sequence belongs to the mitochondrial carrier (TC 2.A.29) family.

The protein resides in the mitochondrion inner membrane. The enzyme catalyses Fe(2+)(in) = Fe(2+)(out). Its function is as follows. Mitochondrial iron transporter that mediates iron uptake. Probably required for heme synthesis of hemoproteins and Fe-S cluster assembly in non-erythroid cells. The protein is Mitoferrin-2B (slc25a28-b) of Xenopus laevis (African clawed frog).